A 308-amino-acid polypeptide reads, in one-letter code: Ribonuclease Z (308 aa).

7 residues coordinate Zn(2+): His-61, His-63, Asp-65, His-66, His-139, Asp-210, and His-268. Catalysis depends on Asp-65, which acts as the Proton acceptor.

It belongs to the RNase Z family. Homodimer. It depends on Zn(2+) as a cofactor.

The catalysed reaction is Endonucleolytic cleavage of RNA, removing extra 3' nucleotides from tRNA precursor, generating 3' termini of tRNAs. A 3'-hydroxy group is left at the tRNA terminus and a 5'-phosphoryl group is left at the trailer molecule.. Zinc phosphodiesterase, which displays some tRNA 3'-processing endonuclease activity. Probably involved in tRNA maturation, by removing a 3'-trailer from precursor tRNA. The protein is Ribonuclease Z of Halobacterium salinarum (strain ATCC 700922 / JCM 11081 / NRC-1) (Halobacterium halobium).